A 226-amino-acid polypeptide reads, in one-letter code: ATP synthase F(0) complex subunit a (226 aa).

The next 6 helical transmembrane spans lie at 6–26, 68–88, 97–117, 138–158, 164–184, and 189–209; these read FASF…IIMF, WALM…LGLL, QLSM…ILGF, IPML…ALAV, ITAG…LMDI, and ATIT…VALI.

The protein belongs to the ATPase A chain family. Component of the ATP synthase complex composed at least of ATP5F1A/subunit alpha, ATP5F1B/subunit beta, ATP5MC1/subunit c (homooctomer), MT-ATP6/subunit a, MT-ATP8/subunit 8, ATP5ME/subunit e, ATP5MF/subunit f, ATP5MG/subunit g, ATP5MK/subunit k, ATP5MJ/subunit j, ATP5F1C/subunit gamma, ATP5F1D/subunit delta, ATP5F1E/subunit epsilon, ATP5PF/subunit F6, ATP5PB/subunit b, ATP5PD/subunit d, ATP5PO/subunit OSCP. ATP synthase complex consists of a soluble F(1) head domain (subunits alpha(3) and beta(3)) - the catalytic core - and a membrane F(0) domain - the membrane proton channel (subunits c, a, 8, e, f, g, k and j). These two domains are linked by a central stalk (subunits gamma, delta, and epsilon) rotating inside the F1 region and a stationary peripheral stalk (subunits F6, b, d, and OSCP). Interacts with DNAJC30; interaction is direct.

It is found in the mitochondrion inner membrane. The enzyme catalyses H(+)(in) = H(+)(out). In terms of biological role, subunit a, of the mitochondrial membrane ATP synthase complex (F(1)F(0) ATP synthase or Complex V) that produces ATP from ADP in the presence of a proton gradient across the membrane which is generated by electron transport complexes of the respiratory chain. ATP synthase complex consist of a soluble F(1) head domain - the catalytic core - and a membrane F(1) domain - the membrane proton channel. These two domains are linked by a central stalk rotating inside the F(1) region and a stationary peripheral stalk. During catalysis, ATP synthesis in the catalytic domain of F(1) is coupled via a rotary mechanism of the central stalk subunits to proton translocation. With the subunit c (ATP5MC1), forms the proton-conducting channel in the F(0) domain, that contains two crucial half-channels (inlet and outlet) that facilitate proton movement from the mitochondrial intermembrane space (IMS) into the matrix. Protons are taken up via the inlet half-channel and released through the outlet half-channel, following a Grotthuss mechanism. This Rattus norvegicus (Rat) protein is ATP synthase F(0) complex subunit a.